A 449-amino-acid chain; its full sequence is MAIHPVEFRYGTPEMRVIWEAENKLQKMLDVEAALAQAEGELGIIPAEAASEIVRKASTEFVTLERVNEIERDTKHDIASLVKALAEQCEGDAGEYVHFGATSNDIVDTSNSLLLRDSISVLRDKLTRVLEVLLALADENRDRVCIGRTHGQHALPTTYGMKFAIWADEIHRQLERLDACSERLCVGMMTGAVGTTAALGEEGLEVHERVSEILGLRPVLISNQVVQRDNHAEFIMVLANIATTLDKIALEIRNLQRTEIMEVGEKFDPEKQVGSSTMPHKMNPITAERICGIARVIRSYVVAALENNPLWHERDLTNSSSERIILPEACILTDYILKLTLDVLCNLVFYPENIKRNLEFTGGLIMAERLMAELTRRGMGRQTAYAAVRQCAIEASRTGRSLRDVVLERSEIMDYLTVEDLEEIMNPETYIGSARRMVERVLEESQKWL.

Residues 9–10, 75–77, and 102–103 contribute to the N(6)-(1,2-dicarboxyethyl)-AMP site; these read RY, KHD, and TS. The Proton donor/acceptor role is filled by H150. Residue Q224 participates in N(6)-(1,2-dicarboxyethyl)-AMP binding. S275 serves as the catalytic Proton donor/acceptor. N(6)-(1,2-dicarboxyethyl)-AMP contacts are provided by residues S276, 281-283, and 320-324; these read KMN and SSERI.

Belongs to the lyase 1 family. Adenylosuccinate lyase subfamily. Homotetramer. Residues from neighboring subunits contribute catalytic and substrate-binding residues to each active site.

The catalysed reaction is N(6)-(1,2-dicarboxyethyl)-AMP = fumarate + AMP. It catalyses the reaction (2S)-2-[5-amino-1-(5-phospho-beta-D-ribosyl)imidazole-4-carboxamido]succinate = 5-amino-1-(5-phospho-beta-D-ribosyl)imidazole-4-carboxamide + fumarate. Its pathway is purine metabolism; AMP biosynthesis via de novo pathway; AMP from IMP: step 2/2. It functions in the pathway purine metabolism; IMP biosynthesis via de novo pathway; 5-amino-1-(5-phospho-D-ribosyl)imidazole-4-carboxamide from 5-amino-1-(5-phospho-D-ribosyl)imidazole-4-carboxylate: step 2/2. Its function is as follows. Catalyzes two reactions in de novo purine nucleotide biosynthesis. Catalyzes the breakdown of 5-aminoimidazole- (N-succinylocarboxamide) ribotide (SAICAR or 2-[5-amino-1-(5-phospho-beta-D-ribosyl)imidazole-4-carboxamido]succinate) to 5-aminoimidazole-4-carboxamide ribotide (AICAR or 5-amino-1-(5-phospho-beta-D-ribosyl)imidazole-4-carboxamide) and fumarate, and of adenylosuccinate (ADS or N(6)-(1,2-dicarboxyethyl)-AMP) to adenosine monophosphate (AMP) and fumarate. The chain is Adenylosuccinate lyase (purB) from Methanothermobacter thermautotrophicus (strain ATCC 29096 / DSM 1053 / JCM 10044 / NBRC 100330 / Delta H) (Methanobacterium thermoautotrophicum).